Here is a 390-residue protein sequence, read N- to C-terminus: GTPase Obg (390 aa).

One can recognise an Obg domain in the interval 1–159; it reads MKFVDEASIL…RELLLELMLL (159 aa). The interval 127 to 147 is disordered; that stretch reads NTRFKSSVNRTPRQKTNGTPG. Residues 129–145 are compositionally biased toward polar residues; that stretch reads RFKSSVNRTPRQKTNGT. An OBG-type G domain is found at 160-333; the sequence is ADVGMLGMPN…LCWDVMTFII (174 aa). GTP-binding positions include 166–173, 191–195, 213–216, 283–286, and 314–316; these read GMPNAGKS, FTTLV, DIPG, NKID, and SAA. Residues Ser173 and Thr193 each coordinate Mg(2+).

This sequence belongs to the TRAFAC class OBG-HflX-like GTPase superfamily. OBG GTPase family. Monomer. Mg(2+) is required as a cofactor.

It localises to the cytoplasm. An essential GTPase which binds GTP, GDP and possibly (p)ppGpp with moderate affinity, with high nucleotide exchange rates and a fairly low GTP hydrolysis rate. Plays a role in control of the cell cycle, stress response, ribosome biogenesis and in those bacteria that undergo differentiation, in morphogenesis control. The protein is GTPase Obg of Escherichia coli O157:H7.